A 70-amino-acid polypeptide reads, in one-letter code: Exodeoxyribonuclease 7 small subunit (70 aa).

This sequence belongs to the XseB family. In terms of assembly, heterooligomer composed of large and small subunits.

The protein localises to the cytoplasm. It catalyses the reaction Exonucleolytic cleavage in either 5'- to 3'- or 3'- to 5'-direction to yield nucleoside 5'-phosphates.. Functionally, bidirectionally degrades single-stranded DNA into large acid-insoluble oligonucleotides, which are then degraded further into small acid-soluble oligonucleotides. This is Exodeoxyribonuclease 7 small subunit from Magnetococcus marinus (strain ATCC BAA-1437 / JCM 17883 / MC-1).